The primary structure comprises 305 residues: tRNA uridine(34) hydroxylase (305 aa).

Residues 124–219 (QDEETLVVDT…YLETIPKEES (96 aa)) form the Rhodanese domain. The active-site Cysteine persulfide intermediate is C179.

It belongs to the TrhO family.

It catalyses the reaction uridine(34) in tRNA + AH2 + O2 = 5-hydroxyuridine(34) in tRNA + A + H2O. Functionally, catalyzes oxygen-dependent 5-hydroxyuridine (ho5U) modification at position 34 in tRNAs. This chain is tRNA uridine(34) hydroxylase, found in Bartonella bacilliformis (strain ATCC 35685 / KC583 / Herrer 020/F12,63).